The primary structure comprises 391 residues: Ferrochelatase (391 aa).

H196 and E281 together coordinate Fe cation.

This sequence belongs to the ferrochelatase family.

The protein resides in the cytoplasm. It catalyses the reaction heme b + 2 H(+) = protoporphyrin IX + Fe(2+). The protein operates within porphyrin-containing compound metabolism; protoheme biosynthesis; protoheme from protoporphyrin-IX: step 1/1. Catalyzes the ferrous insertion into protoporphyrin IX. This Synechococcus sp. (strain CC9311) protein is Ferrochelatase.